A 351-amino-acid chain; its full sequence is Transaldolase (351 aa).

K138 acts as the Schiff-base intermediate with substrate in catalysis.

It belongs to the transaldolase family. Type 2 subfamily.

It localises to the cytoplasm. It carries out the reaction D-sedoheptulose 7-phosphate + D-glyceraldehyde 3-phosphate = D-erythrose 4-phosphate + beta-D-fructose 6-phosphate. It functions in the pathway carbohydrate degradation; pentose phosphate pathway; D-glyceraldehyde 3-phosphate and beta-D-fructose 6-phosphate from D-ribose 5-phosphate and D-xylulose 5-phosphate (non-oxidative stage): step 2/3. Its function is as follows. Transaldolase is important for the balance of metabolites in the pentose-phosphate pathway. The polypeptide is Transaldolase (Neisseria meningitidis serogroup C / serotype 2a (strain ATCC 700532 / DSM 15464 / FAM18)).